Reading from the N-terminus, the 67-residue chain is Large ribosomal subunit protein bL35 (67 aa).

This sequence belongs to the bacterial ribosomal protein bL35 family.

This chain is Large ribosomal subunit protein bL35, found in Rhizobium etli (strain ATCC 51251 / DSM 11541 / JCM 21823 / NBRC 15573 / CFN 42).